We begin with the raw amino-acid sequence, 357 residues long: Mannonate dehydratase (357 aa).

It belongs to the mannonate dehydratase family. Fe(2+) is required as a cofactor. It depends on Mn(2+) as a cofactor.

The catalysed reaction is D-mannonate = 2-dehydro-3-deoxy-D-gluconate + H2O. It participates in carbohydrate metabolism; pentose and glucuronate interconversion. Functionally, catalyzes the dehydration of D-mannonate. The polypeptide is Mannonate dehydratase (Sorangium cellulosum (strain So ce56) (Polyangium cellulosum (strain So ce56))).